Consider the following 139-residue polypeptide: Putative pre-16S rRNA nuclease (139 aa).

This sequence belongs to the YqgF nuclease family.

The protein localises to the cytoplasm. In terms of biological role, could be a nuclease involved in processing of the 5'-end of pre-16S rRNA. This Haemophilus influenzae (strain 86-028NP) protein is Putative pre-16S rRNA nuclease.